The following is a 351-amino-acid chain: Small ribosomal subunit protein uS2 (351 aa).

The interval 302–351 is disordered; it reads QNNYDPSKRGYNPKYVNHKSTFNKFNNKKPAEATSQAKTNEKIVIKAETN. Over residues 340 to 351 the composition is skewed to basic and acidic residues; the sequence is TNEKIVIKAETN.

The protein belongs to the universal ribosomal protein uS2 family.

In Ureaplasma urealyticum serovar 10 (strain ATCC 33699 / Western), this protein is Small ribosomal subunit protein uS2.